A 219-amino-acid chain; its full sequence is Charged multivesicular body protein 5 (219 aa).

Positions 22–153 form a coiled coil; that stretch reads TNVDGRAESI…EIQEALSRSY (132 aa).

The protein belongs to the SNF7 family. In terms of assembly, probable peripherally associated component of the endosomal sorting required for transport complex III (ESCRT-III).

The protein localises to the cytoplasm. It is found in the cytosol. It localises to the endosome membrane. Its function is as follows. Probable peripherally associated component of the endosomal sorting required for transport complex III (ESCRT-III) which is involved in multivesicular bodies (MVBs) formation and sorting of endosomal cargo proteins into MVBs. MVBs contain intraluminal vesicles (ILVs) that are generated by invagination and scission from the limiting membrane of the endosome and mostly are delivered to lysosomes enabling degradation of membrane proteins, such as stimulated growth factor receptors, lysosomal enzymes and lipids. The protein is Charged multivesicular body protein 5 (chmp5) of Xenopus laevis (African clawed frog).